A 133-amino-acid chain; its full sequence is MVSQDFSRDKRLLTPRHFKAVFDSPTGKVPGKNLLILARENGLDHPRLGLVIGKKSVKLAVQRNRLKRLMRDSFRLNQQMLAGLDIVIVARKGLGEVENPELHQHFGKLWKRLVRSRPSPAVADSAGVDSHNA.

Belongs to the RnpA family. As to quaternary structure, consists of a catalytic RNA component (M1 or rnpB) and a protein subunit.

It catalyses the reaction Endonucleolytic cleavage of RNA, removing 5'-extranucleotides from tRNA precursor.. Its function is as follows. RNaseP catalyzes the removal of the 5'-leader sequence from pre-tRNA to produce the mature 5'-terminus. It can also cleave other RNA substrates such as 4.5S RNA. The protein component plays an auxiliary but essential role in vivo by binding to the 5'-leader sequence and broadening the substrate specificity of the ribozyme. The polypeptide is Ribonuclease P protein component (Pseudomonas entomophila (strain L48)).